A 306-amino-acid chain; its full sequence is UDP-3-O-acyl-N-acetylglucosamine deacetylase (306 aa).

Residues His-79, His-238, and Asp-242 each contribute to the Zn(2+) site. The active-site Proton donor is the His-265.

It belongs to the LpxC family. It depends on Zn(2+) as a cofactor.

It catalyses the reaction a UDP-3-O-[(3R)-3-hydroxyacyl]-N-acetyl-alpha-D-glucosamine + H2O = a UDP-3-O-[(3R)-3-hydroxyacyl]-alpha-D-glucosamine + acetate. The protein operates within glycolipid biosynthesis; lipid IV(A) biosynthesis; lipid IV(A) from (3R)-3-hydroxytetradecanoyl-[acyl-carrier-protein] and UDP-N-acetyl-alpha-D-glucosamine: step 2/6. Its function is as follows. Catalyzes the hydrolysis of UDP-3-O-myristoyl-N-acetylglucosamine to form UDP-3-O-myristoylglucosamine and acetate, the committed step in lipid A biosynthesis. This Idiomarina loihiensis (strain ATCC BAA-735 / DSM 15497 / L2-TR) protein is UDP-3-O-acyl-N-acetylglucosamine deacetylase.